Reading from the N-terminus, the 265-residue chain is F-box only protein 6 (265 aa).

Residues L3–K50 enclose the F-box domain. The region spanning F71–H252 is the FBA domain. Residue S251 is modified to Phosphoserine.

In terms of assembly, part of a SCF (SKP1-cullin-F-box) protein ligase complex. Interacts with VCP, CHEK1 and CUL1.

The protein localises to the cytoplasm. It participates in protein modification; protein ubiquitination. Functionally, substrate-recognition component of some SCF (SKP1-CUL1-F-box protein)-type E3 ubiquitin ligase complexes. Involved in endoplasmic reticulum-associated degradation pathway (ERAD) for misfolded lumenal proteins by recognizing and binding sugar chains on unfolded glycoproteins that are retrotranslocated into the cytosol and promoting their ubiquitination and subsequent degradation. Able to recognize and bind denatured glycoproteins, which are modified with not only high-mannose but also complex-type oligosaccharides. Also recognizes sulfated glycans. Also involved in DNA damage response by specifically recognizing activated CHEK1 (phosphorylated on 'Ser-345'), promoting its ubiquitination and degradation. Ubiquitination of CHEK1 is required to ensure that activated CHEK1 does not accumulate as cells progress through S phase, or when replication forks encounter transient impediments during normal DNA replication. The chain is F-box only protein 6 (FBXO6) from Bos taurus (Bovine).